Reading from the N-terminus, the 153-residue chain is Phosphoribosyl-AMP cyclohydrolase (153 aa).

Asp-93 lines the Mg(2+) pocket. A Zn(2+)-binding site is contributed by Cys-94. Asp-95 and Asp-97 together coordinate Mg(2+). Cys-112 and Cys-119 together coordinate Zn(2+).

It belongs to the PRA-CH family. As to quaternary structure, homodimer. The cofactor is Mg(2+). Requires Zn(2+) as cofactor.

It localises to the cytoplasm. It carries out the reaction 1-(5-phospho-beta-D-ribosyl)-5'-AMP + H2O = 1-(5-phospho-beta-D-ribosyl)-5-[(5-phospho-beta-D-ribosylamino)methylideneamino]imidazole-4-carboxamide. It functions in the pathway amino-acid biosynthesis; L-histidine biosynthesis; L-histidine from 5-phospho-alpha-D-ribose 1-diphosphate: step 3/9. In terms of biological role, catalyzes the hydrolysis of the adenine ring of phosphoribosyl-AMP. In Mesorhizobium japonicum (strain LMG 29417 / CECT 9101 / MAFF 303099) (Mesorhizobium loti (strain MAFF 303099)), this protein is Phosphoribosyl-AMP cyclohydrolase.